The sequence spans 189 residues: dCTP deaminase (189 aa).

DCTP-binding positions include 112-117 (KSTYAR), 136-138 (TLE), Gln-157, Tyr-171, and Gln-181. The Proton donor/acceptor role is filled by Glu-138.

The protein belongs to the dCTP deaminase family. As to quaternary structure, homotrimer.

The catalysed reaction is dCTP + H2O + H(+) = dUTP + NH4(+). It functions in the pathway pyrimidine metabolism; dUMP biosynthesis; dUMP from dCTP (dUTP route): step 1/2. Catalyzes the deamination of dCTP to dUTP. The protein is dCTP deaminase of Burkholderia thailandensis (strain ATCC 700388 / DSM 13276 / CCUG 48851 / CIP 106301 / E264).